A 1664-amino-acid chain; its full sequence is Cortactin-binding protein 2 (1664 aa).

Disordered stretches follow at residues 1 to 23 (MATDGASCEPDLSRAPEDAAGAA), 268 to 440 (QLKR…ALHP), 455 to 479 (GNANDPDQNGNTTQSPPSRDVSPTS), and 495 to 618 (QALS…KPSI). Residues 119-276 (RKMQERMSTQ…EQLKRGSDSK (158 aa)) are a coiled coil. 2 stretches are compositionally biased toward low complexity: residues 368 to 379 (SSAPTIPAASAS) and 395 to 407 (TSSTPPIPSGTTP). Arg-499 is subject to Asymmetric dimethylarginine. ANK repeat units lie at residues 710-740 (GRPTLLQQAAAQGNVTLLSMLLNEEGLDTNY), 744-773 (DGHSALYSAATNGHADCVRLLLNAEAQVNA), 777-806 (NGFTPLCAAAAQGHFECLELLLASDADVNH), 810-839 (GGQTPLYLACKNGNTDCIKLLLEAGTDRSI), 843-872 (DGWTPVHAAVDTGNVDSLKLLMYYQAPARG), and 913-943 (EGWTAAHIAASKGFKNCLEILCRHGGLEPEK). Positions 871–900 (RGNSSNEEEPESGAFARDGGEESSEGTSEP) are disordered. Residues 1447-1483 (SKKKGESGAWRKVSTSPRKKSGRFSSPIWNEPDLSPG) form a disordered region. Ser-1525 is modified (phosphoserine). A disordered region spans residues 1558-1664 (RTFHSSGSNP…KHEQVEKPNT (107 aa)). The span at 1587–1600 (PLSSHQATECSTSK) shows a compositional bias: polar residues. Low complexity predominate over residues 1625-1639 (SQNTKRSSSSSNTRQ). Over residues 1646–1664 (SKEENWNLHKHEQVEKPNT) the composition is skewed to basic and acidic residues.

In terms of assembly, interacts with CTTN/cortactin SH3 domain. Interacts with STRN, STRN4/zinedin and MOB4/phocein; this interactions mediate the association with the STRIPAK core complex and may regulate dendritic spine distribution of the STRIPAK complex in hippocampal neurons. Activation of glutamate receptors weakens the interaction with STRN and STRN4.

The protein localises to the cytoplasm. It localises to the cell cortex. It is found in the cell projection. The protein resides in the dendritic spine. Functionally, regulates the dendritic spine distribution of CTTN/cortactin in hippocampal neurons, and thus controls dendritic spinogenesis and dendritic spine maintenance. Associates with the striatin-interacting phosphatase and kinase (STRIPAK) core complex to regulate dendritic spine distribution of the STRIPAK complex in hippocampal neurons. In Oryctolagus cuniculus (Rabbit), this protein is Cortactin-binding protein 2 (CTTNBP2).